Consider the following 200-residue polypeptide: Octanoyltransferase (200 aa).

One can recognise a BPL/LPL catalytic domain in the interval 27–200 (GAEDDQLWLV…WAELFSARWR (174 aa)). Residues 66–73 (RGGQITYH), 134–136 (SLG), and 147–149 (GIA) contribute to the substrate site. Residue C165 is the Acyl-thioester intermediate of the active site.

It belongs to the LipB family.

It is found in the cytoplasm. It carries out the reaction octanoyl-[ACP] + L-lysyl-[protein] = N(6)-octanoyl-L-lysyl-[protein] + holo-[ACP] + H(+). It participates in protein modification; protein lipoylation via endogenous pathway; protein N(6)-(lipoyl)lysine from octanoyl-[acyl-carrier-protein]: step 1/2. Functionally, catalyzes the transfer of endogenously produced octanoic acid from octanoyl-acyl-carrier-protein onto the lipoyl domains of lipoate-dependent enzymes. Lipoyl-ACP can also act as a substrate although octanoyl-ACP is likely to be the physiological substrate. This Dichelobacter nodosus (strain VCS1703A) protein is Octanoyltransferase.